A 1526-amino-acid chain; its full sequence is uncharacterized protein (1526 aa).

WD repeat units lie at residues 334 to 376 (CTKE…EHIS), 862 to 901 (KILG…ELLT), 904 to 945 (GHNS…KTFK), 946 to 985 (GHTS…CLYI), 988 to 1027 (GHTG…CFYI), 1030 to 1069 (GHTS…CLYT), 1072 to 1111 (GHTS…CLYT), 1114 to 1153 (GYTS…CLYT), 1156 to 1195 (GHTN…CLYI), 1198 to 1237 (GHTS…CLCT), 1240 to 1279 (GHTS…CLHT), 1282 to 1321 (GHTN…CLHT), 1324 to 1363 (GHTS…CLYT), 1366 to 1405 (GHTN…CLYT), 1408 to 1447 (GHNN…CLYT), and 1450 to 1491 (GHIN…KTLK). In terms of domain architecture, Pentapeptide repeat spans 823–862 (MVLEGRDLSHTVIIGADFTNTSLRCVNFTEANLAYSVFTK).

This is an uncharacterized protein from Nostoc sp. (strain PCC 7120 / SAG 25.82 / UTEX 2576).